Consider the following 204-residue polypeptide: MSSESPLLEKRLSEDSSRYLRLQKWANMSSADALGLEKERPEEKAAAAENPLVFLCARCRRPLGDSLTWVASQEDTNCILLRSVSCNVSVDKEPKLSKCRDEDGCILEALYCTGCSLSLGYVYRCTPKNLDYKRDLFCLSVEAVESYTLGSSEKQIVSEDKELFNLESRVEIEKSIKQMEEVLTALQKKLREVESKLSLASRGS.

Phosphoserine occurs at positions 13, 16, and 17. In terms of domain architecture, Mis18 spans 51-149 (PLVFLCARCR…SVEAVESYTL (99 aa)). Zn(2+) is bound by residues C56, C59, C112, and C115. K133 participates in a covalent cross-link: Glycyl lysine isopeptide (Lys-Gly) (interchain with G-Cter in SUMO2). A Phosphoserine modification is found at S204.

Belongs to the mis18 family. In terms of assembly, homodimer, and heterodimer with OIP5/MIS18B. Identified in a complex containing MIS18A, OIP5/MIS18B, MIS18BP1, RBBP7 and RBBP4.

It localises to the nucleus. The protein localises to the chromosome. Its subcellular location is the centromere. In terms of biological role, required for recruitment of CENPA to centromeres and normal chromosome segregation during mitosis. The protein is Protein Mis18-alpha (Mis18a) of Mus musculus (Mouse).